Here is a 352-residue protein sequence, read N- to C-terminus: Glycerol-1-phosphate dehydrogenase [NAD(P)+] (352 aa).

Residues 91–95 and 113–116 contribute to the NAD(+) site; these read GRVID and TVAS. D118 is a binding site for substrate. S122 contacts NAD(+). E169 is a binding site for substrate. Zn(2+) is bound by residues E169 and H249. Substrate is bound at residue H253. H269 contacts Zn(2+).

It belongs to the glycerol-1-phosphate dehydrogenase family. In terms of assembly, homodimer. The cofactor is Zn(2+).

It is found in the cytoplasm. It carries out the reaction sn-glycerol 1-phosphate + NAD(+) = dihydroxyacetone phosphate + NADH + H(+). It catalyses the reaction sn-glycerol 1-phosphate + NADP(+) = dihydroxyacetone phosphate + NADPH + H(+). Its pathway is membrane lipid metabolism; glycerophospholipid metabolism. In terms of biological role, catalyzes the NAD(P)H-dependent reduction of dihydroxyacetonephosphate (DHAP or glycerone phosphate) to glycerol 1-phosphate (G1P). The G1P thus generated is used as the glycerophosphate backbone of phospholipids in the cellular membranes of Archaea. The chain is Glycerol-1-phosphate dehydrogenase [NAD(P)+] from Caldivirga maquilingensis (strain ATCC 700844 / DSM 13496 / JCM 10307 / IC-167).